The sequence spans 225 residues: DNA repair and recombination protein RadB (225 aa).

This sequence belongs to the eukaryotic RecA-like protein family. RadB subfamily.

Functionally, involved in DNA repair and in homologous recombination. May regulate the cleavage reactions of the branch-structured DNA. Has a very weak ATPase activity that is not stimulated by DNA. Binds DNA but does not promote DNA strands exchange. This chain is DNA repair and recombination protein RadB, found in Methanococcoides burtonii (strain DSM 6242 / NBRC 107633 / OCM 468 / ACE-M).